A 515-amino-acid chain; its full sequence is Maturase K (515 aa).

It belongs to the intron maturase 2 family. MatK subfamily.

The protein localises to the plastid. The protein resides in the chloroplast. Its function is as follows. Usually encoded in the trnK tRNA gene intron. Probably assists in splicing its own and other chloroplast group II introns. This Larix laricina (Tamarack) protein is Maturase K.